The sequence spans 42 residues: Potassium channel toxin gamma-KTx 1.2 (42 aa).

4 disulfides stabilise this stretch: C5–C23, C11–C34, C20–C39, and C24–C41.

The protein belongs to the ergtoxin family. Gamma-KTx 1 subfamily. In terms of tissue distribution, expressed by the venom gland.

The protein localises to the secreted. Blocks Kv11/ERG potassium channels. The sequence is that of Potassium channel toxin gamma-KTx 1.2 from Centruroides elegans (Bark scorpion).